A 181-amino-acid chain; its full sequence is Bifunctional protein PyrR (181 aa).

A PRPP-binding motif is present at residues 100 to 112 (VVLVDDVIYTGRT).

Belongs to the purine/pyrimidine phosphoribosyltransferase family. PyrR subfamily. Homodimer and homohexamer; in equilibrium.

The enzyme catalyses UMP + diphosphate = 5-phospho-alpha-D-ribose 1-diphosphate + uracil. Functionally, regulates transcriptional attenuation of the pyrimidine nucleotide (pyr) operon by binding in a uridine-dependent manner to specific sites on pyr mRNA. This disrupts an antiterminator hairpin in the RNA and favors formation of a downstream transcription terminator, leading to a reduced expression of downstream genes. In terms of biological role, also displays a weak uracil phosphoribosyltransferase activity which is not physiologically significant. This Pelotomaculum thermopropionicum (strain DSM 13744 / JCM 10971 / SI) protein is Bifunctional protein PyrR.